Here is a 108-residue protein sequence, read N- to C-terminus: uncharacterized protein (108 aa).

The signal sequence occupies residues 1–24 (MNLWEFRFGKSFLFIPNFIMKVLA).

This sequence to M.jannaschii MJ0803.

This is an uncharacterized protein from Methanocaldococcus jannaschii (strain ATCC 43067 / DSM 2661 / JAL-1 / JCM 10045 / NBRC 100440) (Methanococcus jannaschii).